The chain runs to 199 residues: Elongation factor Ts (199 aa).

Positions T82–V85 are involved in Mg(2+) ion dislocation from EF-Tu.

It belongs to the EF-Ts family.

The protein resides in the cytoplasm. Associates with the EF-Tu.GDP complex and induces the exchange of GDP to GTP. It remains bound to the aminoacyl-tRNA.EF-Tu.GTP complex up to the GTP hydrolysis stage on the ribosome. This chain is Elongation factor Ts, found in Leptospira borgpetersenii serovar Hardjo-bovis (strain JB197).